The following is a 108-amino-acid chain: Large ribosomal subunit protein uL24 (108 aa).

It belongs to the universal ribosomal protein uL24 family. As to quaternary structure, part of the 50S ribosomal subunit.

Functionally, one of two assembly initiator proteins, it binds directly to the 5'-end of the 23S rRNA, where it nucleates assembly of the 50S subunit. One of the proteins that surrounds the polypeptide exit tunnel on the outside of the subunit. The chain is Large ribosomal subunit protein uL24 from Citrifermentans bemidjiense (strain ATCC BAA-1014 / DSM 16622 / JCM 12645 / Bem) (Geobacter bemidjiensis).